Consider the following 675-residue polypeptide: G-protein coupled receptor moody (675 aa).

The Extracellular segment spans residues 1–44 (MSDETTGSLGDAFSPMDTPTTTIMPPPADVDESGFSHSLLTFAA). The chain crosses the membrane as a helical span at residues 45-65 (VMTFLIMIVGICGNLLTVVAL). At 66-73 (LKCPKVRN) the chain is on the cytoplasmic side. A helical transmembrane segment spans residues 74-94 (VAAAFIISLCIADLLFCALVL). The Extracellular portion of the chain corresponds to 95-115 (PFQGLRFVQGTWRHGEVLCRL). A disulfide bond links Cys-113 and Cys-192. Residues 116-136 (IPFIQYGNIGVSLLCIAMITI) traverse the membrane as a helical segment. Residues 137–156 (NRYVMITHYSLYNRIYKRHW) lie on the Cytoplasmic side of the membrane. A helical membrane pass occupies residues 157–177 (IAIMIAACWLFSYGMQLPTLL). At 178–206 (GAWGRFGYDARLQTCSIMSDRHGHSSKTT) the chain is on the extracellular side. The chain crosses the membrane as a helical span at residues 207 to 227 (LFITAFVIPCLVIIACYAKIF). Residues 228–327 (WVVHKSEQRL…AKRNEWRITK (100 aa)) are Cytoplasmic-facing. The tract at residues 258 to 316 (TSMPSGDGANPSQVPAGCRVSSDSSSNYSTDVPDTTPGGAGGGAGVKQQPSRVKDQREV) is disordered. A compositionally biased stretch (low complexity) spans 278–294 (SSDSSSNYSTDVPDTTP). A helical transmembrane segment spans residues 328–348 (MVLAIFLSFVICYLPITIVKV). At 349–359 (ADKDVEHPSLH) the chain is on the extracellular side. Residues 360 to 380 (IFSYIMLYLSACINPIIYVIM) traverse the membrane as a helical segment. The Cytoplasmic portion of the chain corresponds to 381–675 (NKQYRKAYKT…LMDKKKFPKD (295 aa)). Disordered stretches follow at residues 475–568 (SKSS…GNGS) and 588–675 (LPPT…FPKD). Positions 536–551 (SSVISANPSSSPSPSS) are enriched in low complexity. Residues 552–565 (SGGGIYRPGIGSMG) show a composition bias toward gly residues. The segment covering 666-675 (LMDKKKFPKD) has biased composition (basic and acidic residues).

This sequence belongs to the G-protein coupled receptor 1 family.

It localises to the cell membrane. Its function is as follows. Required in glia to regulate the acute sensitivity to cocaine and to continuously maintain the proper blood-brain barrier (BBB) function. A moody-mediated signaling pathway functions in glia to regulate nervous system insulation and drug-related behaviors. This is G-protein coupled receptor moody from Drosophila pseudoobscura pseudoobscura (Fruit fly).